The chain runs to 948 residues: UvrABC system protein A (948 aa).

33 to 40 (GLSGSGKS) provides a ligand contact to ATP. The C4-type zinc finger occupies 252-279 (CPICGFSIGELEPRMFSFNSPFGACPTC). 2 consecutive ABC transporter domains span residues 309–587 (WIPT…KKSL) and 607–935 (ASDR…KYLK). 639–646 (GVSGSGKS) is an ATP binding site. The C4-type zinc finger occupies 738-764 (CEACKGDGIIKIEMHFLPDVYVPCEVC).

It belongs to the ABC transporter superfamily. UvrA family. Forms a heterotetramer with UvrB during the search for lesions.

It localises to the cytoplasm. Functionally, the UvrABC repair system catalyzes the recognition and processing of DNA lesions. UvrA is an ATPase and a DNA-binding protein. A damage recognition complex composed of 2 UvrA and 2 UvrB subunits scans DNA for abnormalities. When the presence of a lesion has been verified by UvrB, the UvrA molecules dissociate. The sequence is that of UvrABC system protein A from Staphylococcus aureus (strain MRSA252).